The following is a 176-amino-acid chain: Putative metal-dependent hydrolase BLi00869/BLi00870/BL03027 (176 aa).

Residues H65, H158, and H162 each contribute to the Zn(2+) site.

The protein belongs to the metal hydrolase YfiT family. Homodimer. Zn(2+) serves as cofactor.

Its subcellular location is the cytoplasm. Its function is as follows. Possible metal-dependent hydrolase. The protein is Putative metal-dependent hydrolase BLi00869/BLi00870/BL03027 of Bacillus licheniformis (strain ATCC 14580 / DSM 13 / JCM 2505 / CCUG 7422 / NBRC 12200 / NCIMB 9375 / NCTC 10341 / NRRL NRS-1264 / Gibson 46).